A 130-amino-acid polypeptide reads, in one-letter code: Methylglyoxal synthase (130 aa).

The MGS-like domain occupies 1-130 (MSKPRIALIA…DLARNMQDVC (130 aa)). Substrate is bound by residues H11, K15, 37 to 40 (TGTT), and 57 to 58 (SG). D63 serves as the catalytic Proton donor/acceptor. H90 contacts substrate.

Belongs to the methylglyoxal synthase family.

It carries out the reaction dihydroxyacetone phosphate = methylglyoxal + phosphate. Functionally, catalyzes the formation of methylglyoxal from dihydroxyacetone phosphate. The protein is Methylglyoxal synthase of Burkholderia lata (strain ATCC 17760 / DSM 23089 / LMG 22485 / NCIMB 9086 / R18194 / 383).